Consider the following 425-residue polypeptide: Putative chloroquine resistance transporter (425 aa).

Topologically, residues 1–56 are cytoplasmic; that stretch reads MTGIKKGKNKKKNMKNDDRYKELDSLITNGSEIGNNSGRSCVKRFFKIIGNEMKNN. Residues 57–77 traverse the membrane as a helical segment; that stretch reads VYVYLLSILYLCVCVMNKVFA. Topologically, residues 78-88 are vacuolar; sequence KRTLNKMGNYS. N-linked (GlcNAc...) asparagine glycosylation occurs at asparagine 86. A helical membrane pass occupies residues 89–109; sequence FVTSETHNIICIIVFQLLYFI. Residues 110–126 lie on the Cytoplasmic side of the membrane; it reads YRKTSSSSVYKNESQKN. Residues 127-147 form a helical membrane-spanning segment; sequence FGWQFFLISLLDASTVIISMI. Residues 148–157 lie on the Vacuolar side of the membrane; the sequence is GLTRTTGNIQ. A helical membrane pass occupies residues 158–178; sequence SFIMQLIIPVNMYFWFMFLGY. At 179 to 181 the chain is on the cytoplasmic side; that stretch reads RYH. A helical transmembrane segment spans residues 182–202; the sequence is LFNYLGAFIILITIAVVETFL. Topologically, residues 203 to 210 are vacuolar; it reads SFETQGEN. Residues 211-231 traverse the membrane as a helical segment; it reads SIIFNLIMISAFNTLSFSNMT. At 232–249 the chain is on the cytoplasmic side; the sequence is REVVFKKHKINILRLNAM. A helical membrane pass occupies residues 250 to 270; it reads VVLFQFFTSLLVLPVYNIPFL. Over 271–318 the chain is Vacuolar; it reads KEIYMPFSEMSTNINNGLRCLFYGENTIVENCGVGMVKMCDNCEGAWK. Intrachain disulfides connect cysteine 290–cysteine 313 and cysteine 302–cysteine 310. A helical membrane pass occupies residues 319–339; sequence TFITFSFFNICDNLLACYIID. Residues 340–347 lie on the Cytoplasmic side of the membrane; the sequence is KFSTMTYT. Residues 348-368 traverse the membrane as a helical segment; it reads IVSCIQGPAITIAYYFKFLAG. The Vacuolar portion of the chain corresponds to 369 to 378; sequence DAVRKPRILD. Residues 379–399 traverse the membrane as a helical segment; sequence FLTLFGYLFGTIIYRIGNIIL. At 400 to 425 the chain is on the cytoplasmic side; the sequence is EKKQVIKSQNSNDSEAELTSIETSRA.

It belongs to the CRT-like transporter family.

Its subcellular location is the vacuole membrane. In terms of biological role, nutrient transporter. Involved in maintaining the osmotic homeostasis of the digestive vacuole. This chain is Putative chloroquine resistance transporter, found in Plasmodium berghei.